A 397-amino-acid polypeptide reads, in one-letter code: Anhydro-N-acetylmuramic acid kinase (397 aa).

An ATP-binding site is contributed by 9–16 (GTSYDAID).

This sequence belongs to the anhydro-N-acetylmuramic acid kinase family.

The catalysed reaction is 1,6-anhydro-N-acetyl-beta-muramate + ATP + H2O = N-acetyl-D-muramate 6-phosphate + ADP + H(+). Its pathway is amino-sugar metabolism; 1,6-anhydro-N-acetylmuramate degradation. It participates in cell wall biogenesis; peptidoglycan recycling. In terms of biological role, catalyzes the specific phosphorylation of 1,6-anhydro-N-acetylmuramic acid (anhMurNAc) with the simultaneous cleavage of the 1,6-anhydro ring, generating MurNAc-6-P. Is required for the utilization of anhMurNAc either imported from the medium or derived from its own cell wall murein, and thus plays a role in cell wall recycling. This Rhodococcus erythropolis (strain PR4 / NBRC 100887) protein is Anhydro-N-acetylmuramic acid kinase.